The primary structure comprises 146 residues: Late protein OPG112 (146 aa).

The helical transmembrane segment at 10–32 (LAMTAFFGELSTLDIMALIMSIF) threads the bilayer.

This sequence belongs to the orthopoxvirus OPG112 family.

The protein resides in the host membrane. Its subcellular location is the host cytoplasm. Functionally, contributes to the formation of crescents and immature virions (IV). Interacts with phosphatidylinositol-3-phosphate (PI3P) and phosphatidylinositol-4-phosphate (PI4P) lipids in order to form virion membranes. Mechanistically, mediates proper formation of OPG125-hexamers, and hence the honey comb lattice and spherical immature virus. This chain is Late protein OPG112 (OPG112), found in Bos taurus (Bovine).